Here is a 62-residue protein sequence, read N- to C-terminus: Cytotoxin 7 (62 aa).

A signal peptide spans 1-2 (YT). 4 disulfide bridges follow: Cys5–Cys23, Cys16–Cys40, Cys44–Cys55, and Cys56–Cys61.

It belongs to the three-finger toxin family. Short-chain subfamily. Type IA cytotoxin sub-subfamily. Monomer in solution; Homodimer and oligomer in the presence of negatively charged lipids forming a pore with a size ranging between 20 and 30 Angstroms. Expressed by the venom gland.

Its subcellular location is the secreted. It is found in the target cell membrane. In terms of biological role, shows cytolytic activity on many different cells by forming pore in lipid membranes. In vivo, increases heart rate or kills the animal by cardiac arrest. In addition, it binds to heparin with high affinity, interacts with Kv channel-interacting protein 1 (KCNIP1) in a calcium-independent manner, and binds to integrin alpha-V/beta-3 (ITGAV/ITGB3) with moderate affinity. The sequence is that of Cytotoxin 7 from Naja sputatrix (Malayan spitting cobra).